A 341-amino-acid chain; its full sequence is Putative UPF0607 protein FLJ37424 (341 aa).

2 disordered regions span residues 72–131 (PKTE…NPRP) and 216–283 (GLLM…LPCL). Basic and acidic residues predominate over residues 79–101 (EEPKEATEVKDQVETQGQEDNKR). Residues 108 to 127 (EAASTSRPLETQGNLTSSWY) show a composition bias toward polar residues. A compositionally biased stretch (basic residues) spans 243 to 252 (AGHRSHKRKL).

The protein belongs to the UPF0607 family.

In Homo sapiens (Human), this protein is Putative UPF0607 protein FLJ37424.